We begin with the raw amino-acid sequence, 418 residues long: tRNA-2-methylthio-N(6)-dimethylallyladenosine synthase (418 aa).

Residues 2–118 (PGYYLWTIGC…WGEIPEGFIL (117 aa)) form the MTTase N-terminal domain. Positions 11, 47, 81, 134, 138, and 141 each coordinate [4Fe-4S] cluster. Residues 120–352 (LKPPVSASIT…DLQKETVSKA (233 aa)) enclose the Radical SAM core domain. Positions 354-414 (SALVDTFAEV…PWSLQAKLVK (61 aa)) constitute a TRAM domain.

This sequence belongs to the methylthiotransferase family. MiaB subfamily. Monomer. It depends on [4Fe-4S] cluster as a cofactor.

It localises to the cytoplasm. The enzyme catalyses N(6)-dimethylallyladenosine(37) in tRNA + (sulfur carrier)-SH + AH2 + 2 S-adenosyl-L-methionine = 2-methylsulfanyl-N(6)-dimethylallyladenosine(37) in tRNA + (sulfur carrier)-H + 5'-deoxyadenosine + L-methionine + A + S-adenosyl-L-homocysteine + 2 H(+). In terms of biological role, catalyzes the methylthiolation of N6-(dimethylallyl)adenosine (i(6)A), leading to the formation of 2-methylthio-N6-(dimethylallyl)adenosine (ms(2)i(6)A) at position 37 in tRNAs that read codons beginning with uridine. In Dehalococcoides mccartyi (strain ATCC BAA-2266 / KCTC 15142 / 195) (Dehalococcoides ethenogenes (strain 195)), this protein is tRNA-2-methylthio-N(6)-dimethylallyladenosine synthase.